Reading from the N-terminus, the 339-residue chain is S-adenosylmethionine:tRNA ribosyltransferase-isomerase (339 aa).

This sequence belongs to the QueA family. Monomer.

It is found in the cytoplasm. The catalysed reaction is 7-aminomethyl-7-carbaguanosine(34) in tRNA + S-adenosyl-L-methionine = epoxyqueuosine(34) in tRNA + adenine + L-methionine + 2 H(+). It participates in tRNA modification; tRNA-queuosine biosynthesis. Transfers and isomerizes the ribose moiety from AdoMet to the 7-aminomethyl group of 7-deazaguanine (preQ1-tRNA) to give epoxyqueuosine (oQ-tRNA). The chain is S-adenosylmethionine:tRNA ribosyltransferase-isomerase from Campylobacter fetus subsp. fetus (strain 82-40).